We begin with the raw amino-acid sequence, 261 residues long: Triosephosphate isomerase (261 aa).

Residue 10–12 (NWK) participates in substrate binding. The active-site Electrophile is the His-100. The active-site Proton acceptor is the Glu-172. Substrate-binding positions include Gly-178, Ser-218, and 239-240 (GG).

It belongs to the triosephosphate isomerase family. Homodimer.

It is found in the cytoplasm. It catalyses the reaction D-glyceraldehyde 3-phosphate = dihydroxyacetone phosphate. Its pathway is carbohydrate biosynthesis; gluconeogenesis. It participates in carbohydrate degradation; glycolysis; D-glyceraldehyde 3-phosphate from glycerone phosphate: step 1/1. Functionally, involved in the gluconeogenesis. Catalyzes stereospecifically the conversion of dihydroxyacetone phosphate (DHAP) to D-glyceraldehyde-3-phosphate (G3P). This chain is Triosephosphate isomerase, found in Mycobacterium leprae (strain TN).